The sequence spans 438 residues: V-type ATP synthase beta chain (438 aa).

Belongs to the ATPase alpha/beta chains family.

In terms of biological role, produces ATP from ADP in the presence of a proton gradient across the membrane. The V-type beta chain is a regulatory subunit. The sequence is that of V-type ATP synthase beta chain (atpB) from Chlamydia pneumoniae (Chlamydophila pneumoniae).